Consider the following 744-residue polypeptide: Probable methylmalonyl-CoA mutase, mitochondrial (744 aa).

Residues Q605–A737 form the B12-binding domain. Residue H618 participates in adenosylcob(III)alamin binding.

It belongs to the methylmalonyl-CoA mutase family. Homodimer. Adenosylcob(III)alamin is required as a cofactor.

It localises to the mitochondrion matrix. The catalysed reaction is (R)-methylmalonyl-CoA = succinyl-CoA. Functionally, involved, in man, in the degradation of several amino acids, odd-chain fatty acids and cholesterol via propionyl-CoA to the tricarboxylic acid cycle. MCM has different functions in other species. This is Probable methylmalonyl-CoA mutase, mitochondrial (mmcm-1) from Caenorhabditis elegans.